A 646-amino-acid polypeptide reads, in one-letter code: Calcium-dependent protein kinase 2 (646 aa).

Gly-2 is lipidated: N-myristoyl glycine. Cys-5 is lipidated: S-palmitoyl cysteine. Residues 27-169 (RIGAEQASSS…HMRRVSSAGL (143 aa)) form a disordered region. A compositionally biased stretch (polar residues) spans 32–43 (QASSSSHGNGQV). 2 stretches are compositionally biased toward basic and acidic residues: residues 73–119 (PETK…KREV) and 126–157 (AKPE…EPQK). Residues 186-444 (YSLGRKLGQG…AHQVLCHPWV (259 aa)) enclose the Protein kinase domain. ATP is bound by residues 192-200 (LGQGQFGTT) and Lys-215. Residue Asp-310 is the Proton acceptor of the active site. Phosphoserine is present on Ser-350. The segment at 450 to 480 (APDKPLDSAVLSRMKQFSAMNKFKKMALRVI) is autoinhibitory domain. 4 consecutive EF-hand domains span residues 487–522 (EEIA…VGAN), 523–558 (LKES…LNKI), 559–592 (ERED…EEFG), and 593–628 (VEDA…GSIM). Ca(2+) contacts are provided by Asp-500, Asp-502, Ser-504, Gln-506, Glu-511, Asp-536, Asp-538, Ser-540, Thr-542, Glu-547, Asp-572, Asp-574, Ser-576, Glu-583, Asp-606, Asp-608, Asp-610, Arg-612, and Glu-617.

The protein belongs to the protein kinase superfamily. Ser/Thr protein kinase family. CDPK subfamily. Interacts with 14-3-3 proteins.

It is found in the endoplasmic reticulum membrane. The catalysed reaction is L-seryl-[protein] + ATP = O-phospho-L-seryl-[protein] + ADP + H(+). It catalyses the reaction L-threonyl-[protein] + ATP = O-phospho-L-threonyl-[protein] + ADP + H(+). Activated by calcium. Autophosphorylation may play an important role in the regulation of the kinase activity. Functionally, may play a role in signal transduction pathways that involve calcium as a second messenger. This Arabidopsis thaliana (Mouse-ear cress) protein is Calcium-dependent protein kinase 2 (CPK2).